Consider the following 97-residue polypeptide: Aspartyl/glutamyl-tRNA(Asn/Gln) amidotransferase subunit C (97 aa).

Belongs to the GatC family. In terms of assembly, heterotrimer of A, B and C subunits.

It carries out the reaction L-glutamyl-tRNA(Gln) + L-glutamine + ATP + H2O = L-glutaminyl-tRNA(Gln) + L-glutamate + ADP + phosphate + H(+). The enzyme catalyses L-aspartyl-tRNA(Asn) + L-glutamine + ATP + H2O = L-asparaginyl-tRNA(Asn) + L-glutamate + ADP + phosphate + 2 H(+). Its function is as follows. Allows the formation of correctly charged Asn-tRNA(Asn) or Gln-tRNA(Gln) through the transamidation of misacylated Asp-tRNA(Asn) or Glu-tRNA(Gln) in organisms which lack either or both of asparaginyl-tRNA or glutaminyl-tRNA synthetases. The reaction takes place in the presence of glutamine and ATP through an activated phospho-Asp-tRNA(Asn) or phospho-Glu-tRNA(Gln). This is Aspartyl/glutamyl-tRNA(Asn/Gln) amidotransferase subunit C from Synechococcus sp. (strain CC9902).